Here is a 1357-residue protein sequence, read N- to C-terminus: MAYSYTEKKRIRKDFSKLPDVMDVPYLLAIQLDSYREFLQAGATKDQFRDVGLHAAFKSVFPIISYSGNAALEYVGYRLGEPAFDVKECVLRGVTYAVPLRVKVRLIIFDKESSNKAIKDIKEQEVYMGEIPLMTENGTFVINGTERVIVSQLHRSPGVFFDHDRGKTHSSGKLLYSARIIPYRGSWLDFEFDPKDCVFVRIDRRRKLPASVLLRALGYTTEQVLDAFYTTNVFHVRGENLSLELVPQRLRGEIAVLDILDDKGKVIVEQGRRITARHINQLEKAGIKELEVPLDYVLGRTTAKVIVHPATGEIIAECNTELNTEILAKIAKAQVVRIETLYTNDIDCGPFVSDTLKIDSTSNQLEALVEIYRMMRPGEPPTKDAAETLFNNLFFSPERYDLSAVGRMKFNRRIGRTEIEGSGVLCKEDIVAVLKTLVDIRNGKGIVDDIDHLGNRRVRCVGEMAENQFRVGLVRVERAVKERLSMAESEGLMPQDLINAKPVAAAVKEFFGSSQLSQFMGQNNPLSEITHKRRVSALGPGGLTRERAGFEVRDVHPTHYGRVCPIETPEGPNIGLINSLAAYARTNQYGFLESPYRVVKEGLVTEEIVFLSAIEEADHVIAQASAAMNDKQELIDELVAVRHLNEFTVKAPADVTLMDVSPKQVVSVAASLIPFLEHDDANRALMGSNMQRQAVPTLRADKPLVGTGMERNVARDSGVCVVARRGGVIDSVDASRIVVRVADDEVETGEAGVDIYNLTKYTRSNQNTCINQRPLVSKGDRVQRSDIMADGPSTDMGELALGQNMRIAFMAWNGFNFEDSICLSERVVQEDRFTTIHIQELTCVARDTKLGPEEITADIPNVGEAALNKLDEAGIVYVGAEVGAGDILVGKVTPKGETQLTPEEKLLRAIFGEKASDVKDTSLRVPTGTKGTVIDVQVFTRDGVERDARALSIEKSQLDEIRKDLNEEFRIVEGATFERLRSALVGRVAEGGAGLKKGQEITNEVLDGLEHGQWFKLRMAEDALNEQLEKAQAYIVDRRRLLDDKFEDKKRKLQQGDDLAPGVLKIVKVYLAIRRRIQPGDKMAGRHGNKGVVSVIMPVEDMPHDANGTPVDIVLNPLGVPSRMNVGQILETHLGLAAKGLGEKINRMLEEQRKVAELRKFLNEIYNEIGGRQESLEDLTDNEILDLAKNLRNGVPMATPVFDGAKESEIKAMLKLADMPESGQMQLFDGRTGNKFERAVTVGYMYMLKLNHLVDDKMHARSTGSYSLVTQQPLGGKAQFGGQRFGEMEVWALEAYCAAYTLQEMLTVKSDDVNGRTKMYKNIVDGDHRMEPGMPESFNVLIKEIRSLGIDIDLETE.

It belongs to the RNA polymerase beta chain family. In terms of assembly, the RNAP catalytic core consists of 2 alpha, 1 beta, 1 beta' and 1 omega subunit. When a sigma factor is associated with the core the holoenzyme is formed, which can initiate transcription.

The catalysed reaction is RNA(n) + a ribonucleoside 5'-triphosphate = RNA(n+1) + diphosphate. Functionally, DNA-dependent RNA polymerase catalyzes the transcription of DNA into RNA using the four ribonucleoside triphosphates as substrates. The polypeptide is DNA-directed RNA polymerase subunit beta (Pseudomonas syringae pv. syringae (strain B728a)).